A 335-amino-acid chain; its full sequence is MKKIAIDAMGGDYAPKAIVEGVNQAIESFSDIEIQLYGDQSRIESYLVKSDRVSIVHTDEKINSDDEPAKAIRRKKNASMVLAARAVKDGRADAVLSAGNTGALLAAGLFIIGRIKGVDRPGLLSTLPTVDGSGFDMLDLGANAENTAEHLHQYAILGSFYAKHVRGIAKPRIGLLNNGTEATKGDSLRKEVYNFLASDSSLQFIGNVEARDLMSGVADVVVADGFTGNAVLKSIEGTAMSIMGQLKSAIAVGGVKAKFGALLLKSSLYDLKDTLDYSSAGGAVLFGLKAPLVKSHGSSDAKAIFHTIKQVRTMLETDVVGQLVEEFSKESDVND.

Belongs to the PlsX family. As to quaternary structure, homodimer. Probably interacts with PlsY.

It localises to the cytoplasm. It catalyses the reaction a fatty acyl-[ACP] + phosphate = an acyl phosphate + holo-[ACP]. Its pathway is lipid metabolism; phospholipid metabolism. Its function is as follows. Catalyzes the reversible formation of acyl-phosphate (acyl-PO(4)) from acyl-[acyl-carrier-protein] (acyl-ACP). This enzyme utilizes acyl-ACP as fatty acyl donor, but not acyl-CoA. The sequence is that of Phosphate acyltransferase from Streptococcus equi subsp. equi (strain 4047).